The chain runs to 199 residues: V-type ATP synthase subunit E (199 aa).

The protein belongs to the V-ATPase E subunit family.

In terms of biological role, produces ATP from ADP in the presence of a proton gradient across the membrane. The sequence is that of V-type ATP synthase subunit E (atpE) from Borreliella burgdorferi (strain ATCC 35210 / DSM 4680 / CIP 102532 / B31) (Borrelia burgdorferi).